We begin with the raw amino-acid sequence, 254 residues long: Bowman-Birk type bran trypsin inhibitor (254 aa).

The N-terminal stretch at 1-22 (MSNTTMATSTILLFLLAGLAAA) is a signal peptide. Residues 23 to 118 (HGDGDTTIRL…KCTAALDGLS (96 aa)) constitute a propeptide that is removed on maturation. Repeats lie at residues 46–120 (KPWD…LSME), 121–187 (RPWK…LCTP), and 188–251 (RPWG…CKPR). 10 disulfide bridges follow: cysteine 51–cysteine 248, cysteine 125–cysteine 185, cysteine 126–cysteine 143, cysteine 152–cysteine 159, cysteine 156–cysteine 172, cysteine 193–cysteine 248, cysteine 194–cysteine 209, cysteine 199–cysteine 207, cysteine 216–cysteine 223, and cysteine 220–cysteine 236. Residues 252 to 254 (AEN) constitute a propeptide that is removed on maturation.

Belongs to the Bowman-Birk serine protease inhibitor family. In terms of tissue distribution, expressed in roots, leaves and flowers.

The protein is Bowman-Birk type bran trypsin inhibitor (RBBI3.3) of Oryza sativa subsp. indica (Rice).